The chain runs to 38 residues: Large ribosomal subunit protein bL36 (38 aa).

It belongs to the bacterial ribosomal protein bL36 family.

The sequence is that of Large ribosomal subunit protein bL36 from Buchnera aphidicola subsp. Acyrthosiphon pisum (strain 5A).